We begin with the raw amino-acid sequence, 177 residues long: CASP-like protein 2U1 (177 aa).

A helical transmembrane segment spans residues 1 to 21 (MVLRIVASLLSIAALVLMAKD). The Cytoplasmic portion of the chain corresponds to 22–48 (KQVVYLNLAGEELTLEAKHSYVEAFVY). A helical membrane pass occupies residues 49 to 69 (LVYSNGLVAIYCFLLVFALVF). Topologically, residues 70-80 (RLIDKAGCGKS) are extracellular. The chain crosses the membrane as a helical span at residues 81-101 (AAWIIFLLDQGLAYVLLAAAA). Residues 102 to 131 (ASTEVAYVAKRGNNKVGWSEVCSTFGHFCN) are Cytoplasmic-facing. A helical transmembrane segment spans residues 132 to 152 (LVGVSIVITFISVLAMATLSV). At 153 to 177 (MSARRLFKTYGPERKQISSNDAPAI) the chain is on the extracellular side.

The protein belongs to the Casparian strip membrane proteins (CASP) family. In terms of assembly, homodimer and heterodimers.

The protein localises to the cell membrane. The polypeptide is CASP-like protein 2U1 (Osmunda lancea (Fern)).